The sequence spans 353 residues: MHFSSSSTSSTWTILITLGCLMLHASLSAAQLTPTFYDRSCPNVTNIVRETIVNELRSDPRIAASILRLHFHDCFVNGCDASILLDNTTSFRTEKDAFGNANSARGFPVIDRMKAAVERACPRTVSCADMLTIAAQQSVTLAGGPSWRVPLGRRDSLQAFLELANANLPAPFFTLPQLKASFRNVGLDRPSDLVALSGGHTFGKNQCQFILDRLYNFSNTGLPDPTLNTTYLQTLRGLCPLNGNRSALVDFDLRTPTVFDNKYYVNLKERKGLIQSDQELFSSPNATDTIPLVRAYADGTQTFFNAFVEAMNRMGNITPTTGTQGQIRLNCRVVNSNSLLHDVVDIVDFVSSM.

The N-terminal stretch at 1–30 (MHFSSSSTSSTWTILITLGCLMLHASLSAA) is a signal peptide. Residue Gln31 is modified to Pyrrolidone carboxylic acid. 4 disulfides stabilise this stretch: Cys41/Cys121, Cys74/Cys79, Cys127/Cys331, and Cys207/Cys239. An N-linked (GlcNAc...) asparagine glycan is attached at Asn43. Catalysis depends on His72, which acts as the Proton acceptor. The Ca(2+) site is built by Asp73, Val76, Gly78, Asp80, and Ser82. An N-linked (GlcNAc...) asparagine glycan is attached at Asn87. Residue Pro169 participates in substrate binding. His200 contributes to the heme b binding site. Position 201 (Thr201) interacts with Ca(2+). N-linked (GlcNAc...) asparagine glycosylation is found at Asn216, Asn228, and Asn244. Residues Asp252, Thr255, and Asp260 each contribute to the Ca(2+) site. N-linked (GlcNAc...) asparagine glycosylation occurs at Asn285.

It belongs to the peroxidase family. Classical plant (class III) peroxidase subfamily. It depends on heme b as a cofactor. Ca(2+) serves as cofactor. As to expression, preferentially expressed in roots, but also detected in flowers, leaves and stems.

Its subcellular location is the secreted. The protein resides in the vacuole. The enzyme catalyses 2 a phenolic donor + H2O2 = 2 a phenolic radical donor + 2 H2O. Its function is as follows. Removal of H(2)O(2), oxidation of toxic reductants, biosynthesis and degradation of lignin, suberization, auxin catabolism, response to environmental stresses such as wounding, pathogen attack and oxidative stress. These functions might be dependent on each isozyme/isoform in each plant tissue. In terms of biological role, may be implicated in the systemic acquired resistance response via the salicylic acid signal transduction pathway. Exhibits a Ca(2+)-pectate binding affinity which could be interpreted in vivo as a specificity to interact with the pectic structure of the cell wall. This Arabidopsis thaliana (Mouse-ear cress) protein is Peroxidase 34 (PER34).